The chain runs to 583 residues: Leucine aminopeptidase 2, chloroplastic (583 aa).

Residues 1 to 70 (MAVTLVTSFA…ISHATLGLTQ (70 aa)) constitute a chloroplast transit peptide. Mn(2+) contacts are provided by Lys-351 and Asp-356. Lys-363 is a catalytic residue. Positions 376, 436, and 438 each coordinate Mn(2+). Arg-440 is an active-site residue.

It belongs to the peptidase M17 family. Homohexamer (dimer of homotrimers). It depends on Mn(2+) as a cofactor.

It is found in the plastid. It localises to the chloroplast. The catalysed reaction is Release of an N-terminal amino acid, Xaa-|-Yaa-, in which Xaa is preferably Leu, but may be other amino acids including Pro although not Arg or Lys, and Yaa may be Pro. Amino acid amides and methyl esters are also readily hydrolyzed, but rates on arylamides are exceedingly low.. It carries out the reaction Release of N-terminal proline from a peptide.. Presumably involved in the processing and regular turnover of intracellular proteins. Catalyzes the removal of unsubstituted N-terminal amino acids from various peptides. Possesses leucine aminopeptidase activity against the model substrate leucine-amido methyl coumarin. Does not seem to possess Cys-Gly dipeptidase activity. Functionally, functions as a molecular chaperone to protect proteins from heat-induced damage. In Arabidopsis thaliana (Mouse-ear cress), this protein is Leucine aminopeptidase 2, chloroplastic.